A 439-amino-acid polypeptide reads, in one-letter code: S-layer protein (439 aa).

Positions 1–30 are cleaved as a signal peptide; sequence MKKNLRIVSAAAAALLAVAPIAATAMPVNA.

In terms of processing, glycosylated.

The protein localises to the secreted. Its subcellular location is the cell wall. It is found in the S-layer. The S-layer is a paracrystalline mono-layered assembly of proteins which coat the surface of bacteria. In Lactobacillus helveticus (Lactobacillus suntoryeus), this protein is S-layer protein (slpH).